The sequence spans 368 residues: Phenylalanine--tRNA ligase alpha subunit (368 aa).

E268 serves as a coordination point for Mg(2+).

Belongs to the class-II aminoacyl-tRNA synthetase family. Phe-tRNA synthetase alpha subunit type 1 subfamily. Tetramer of two alpha and two beta subunits. Mg(2+) serves as cofactor.

The protein localises to the cytoplasm. The catalysed reaction is tRNA(Phe) + L-phenylalanine + ATP = L-phenylalanyl-tRNA(Phe) + AMP + diphosphate + H(+). The polypeptide is Phenylalanine--tRNA ligase alpha subunit (Nitrobacter hamburgensis (strain DSM 10229 / NCIMB 13809 / X14)).